We begin with the raw amino-acid sequence, 237 residues long: Probable transcriptional regulatory protein PSHAa1370 (237 aa).

It belongs to the TACO1 family.

It localises to the cytoplasm. This Pseudoalteromonas translucida (strain TAC 125) protein is Probable transcriptional regulatory protein PSHAa1370.